We begin with the raw amino-acid sequence, 241 residues long: Carboxy-S-adenosyl-L-methionine synthase (241 aa).

Residues Y38, 63–65 (GCS), 88–89 (DN), 116–117 (DI), N131, and R198 each bind S-adenosyl-L-methionine.

Belongs to the class I-like SAM-binding methyltransferase superfamily. Cx-SAM synthase family. As to quaternary structure, homodimer.

It catalyses the reaction prephenate + S-adenosyl-L-methionine = carboxy-S-adenosyl-L-methionine + 3-phenylpyruvate + H2O. Its function is as follows. Catalyzes the conversion of S-adenosyl-L-methionine (SAM) to carboxy-S-adenosyl-L-methionine (Cx-SAM). The chain is Carboxy-S-adenosyl-L-methionine synthase from Histophilus somni (strain 2336) (Haemophilus somnus).